The primary structure comprises 81 residues: Penaeidin-3j (81 aa).

Positions 1–19 (MRLVVCLVFLASFALVCQG) are cleaved as a signal peptide. Q20 bears the Pyrrolidone carboxylic acid mark. 3 disulfides stabilise this stretch: C50–C65, C54–C72, and C66–C73. S80 carries the post-translational modification Serine amide.

Belongs to the penaeidin family.

The protein localises to the cytoplasmic granule. Its function is as follows. Antibacterial and antifungal activity. Presents chitin-binding activity. In Penaeus vannamei (Whiteleg shrimp), this protein is Penaeidin-3j.